The primary structure comprises 598 residues: uncharacterized protein (598 aa).

Residues 1–23 (MSHEGSRQARDRGVTRSKAEKAR) show a composition bias toward basic and acidic residues. Disordered regions lie at residues 1-32 (MSHEGSRQARDRGVTRSKAEKARPPTQPVPQV), 151-190 (FHNEEPGNPDQFLLGSSWDKESQKPTQPSEPSAEPKVTPR), and 222-241 (PSKESLRSTAEGERVYSPQS). A compositionally biased stretch (basic and acidic residues) spans 225-235 (ESLRSTAEGER). Phosphoserine occurs at positions 238 and 242. Disordered regions lie at residues 366–396 (RRSQAGTATSACESQALSSRAPSKPHVSSPR) and 551–571 (AEEGTPQAPEQQPIQTGVSKP). Composition is skewed to polar residues over residues 369–386 (QAGTATSACESQALSSRA) and 558–569 (APEQQPIQTGVS).

This is an uncharacterized protein from Mus musculus (Mouse).